Consider the following 545-residue polypeptide: Glucose-6-phosphate isomerase (545 aa).

Catalysis depends on E351, which acts as the Proton donor. Active-site residues include H382 and K510.

Belongs to the GPI family.

The protein resides in the cytoplasm. The catalysed reaction is alpha-D-glucose 6-phosphate = beta-D-fructose 6-phosphate. The protein operates within carbohydrate biosynthesis; gluconeogenesis. It participates in carbohydrate degradation; glycolysis; D-glyceraldehyde 3-phosphate and glycerone phosphate from D-glucose: step 2/4. Functionally, catalyzes the reversible isomerization of glucose-6-phosphate to fructose-6-phosphate. This is Glucose-6-phosphate isomerase from Helicobacter pylori (strain G27).